The chain runs to 194 residues: Adenylate kinase (194 aa).

ATP is bound at residue 10–15 (GAGKGT). The segment at 30–59 (STGDMLRAAVAQQSEIGKRAKAVMDAGQLV) is NMP. AMP-binding positions include Thr-31, Arg-36, 57 to 59 (QLV), 85 to 88 (GYPR), and Gln-92. The segment at 126–142 (SRVAETIAKGGQVRSDD) is LID. An ATP-binding site is contributed by Arg-127. AMP is bound by residues Arg-139 and Arg-150. Ala-178 serves as a coordination point for ATP.

Belongs to the adenylate kinase family. Monomer.

It localises to the cytoplasm. The enzyme catalyses AMP + ATP = 2 ADP. Its pathway is purine metabolism; AMP biosynthesis via salvage pathway; AMP from ADP: step 1/1. Its function is as follows. Catalyzes the reversible transfer of the terminal phosphate group between ATP and AMP. Plays an important role in cellular energy homeostasis and in adenine nucleotide metabolism. This chain is Adenylate kinase, found in Brucella canis (strain ATCC 23365 / NCTC 10854 / RM-666).